A 160-amino-acid polypeptide reads, in one-letter code: Cyclic pyranopterin monophosphate synthase (160 aa).

Substrate is bound by residues Met77–His79 and Met114–Glu115. The active site involves Asp129.

This sequence belongs to the MoaC family. In terms of assembly, homohexamer; trimer of dimers.

The enzyme catalyses (8S)-3',8-cyclo-7,8-dihydroguanosine 5'-triphosphate = cyclic pyranopterin phosphate + diphosphate. It functions in the pathway cofactor biosynthesis; molybdopterin biosynthesis. In terms of biological role, catalyzes the conversion of (8S)-3',8-cyclo-7,8-dihydroguanosine 5'-triphosphate to cyclic pyranopterin monophosphate (cPMP). The chain is Cyclic pyranopterin monophosphate synthase from Listeria monocytogenes serotype 4b (strain F2365).